We begin with the raw amino-acid sequence, 300 residues long: MATVPFPILCLPDFVLQKSLKLMGVVEHLCLSILSKNIKQLIATLKGYPKCFSFKFVPFTSLTVVGERFKHFSFRFDIDESSQNANLRSYTDEGTYITLTVPGFTVKHWIEHVAYVLCRNNSIKLVLWEPNIDEVYEIVKDMRTVEVVIVSSEIQSCHLLKLFPSLRYLGVYKAPISAQILTYNLLHLEVKTKVTLNDILISNCSNFSISGNDVSDKELNFFMRSWIKGSNPRLTKFYIRNSLRVRDPYLETVLFQNIDYIETHKKIYWRTFEISRPDGTKADVMWDPLYNSYFNMTVQH.

Residues 5–51 form the F-box domain; sequence PFPILCLPDFVLQKSLKLMGVVEHLCLSILSKNIKQLIATLKGYPKC.

As to expression, expressed in D-type motor neuron cell bodies.

Functionally, substrate recognition component of E3 ubiquitin-protein ligase complex which mediates the ubiquitination and subsequent proteasomal degradation of target proteins such as mdl-1. Positively regulates axon regeneration by targeting mdl-1 for ubiquitin-mediated degradation; probably thereby reducing levels of mdl-1-mxl-1 heterodimers, allowing free mxl-1 to form complexes with tdpt-1 and thus inhibiting tdpt-1-dependent sumoylation of ets-4. The protein is F-box associated domain-containing protein sdz-33 of Caenorhabditis elegans.